The chain runs to 432 residues: Adenylosuccinate synthetase (432 aa).

Residues 13-19 (GDEGKGK) and 41-43 (GHT) contribute to the GTP site. D14 acts as the Proton acceptor in catalysis. D14 and G41 together coordinate Mg(2+). Residues 14 to 17 (DEGK), 39 to 42 (NAGH), T130, R144, Q225, T240, and R304 each bind IMP. The Proton donor role is filled by H42. 300-306 (ATTGRRR) contributes to the substrate binding site. GTP contacts are provided by residues R306, 332–334 (KLD), and 415–417 (STG).

The protein belongs to the adenylosuccinate synthetase family. Homodimer. Mg(2+) is required as a cofactor.

Its subcellular location is the cytoplasm. It carries out the reaction IMP + L-aspartate + GTP = N(6)-(1,2-dicarboxyethyl)-AMP + GDP + phosphate + 2 H(+). It participates in purine metabolism; AMP biosynthesis via de novo pathway; AMP from IMP: step 1/2. In terms of biological role, plays an important role in the de novo pathway of purine nucleotide biosynthesis. Catalyzes the first committed step in the biosynthesis of AMP from IMP. This Enterobacter sp. (strain 638) protein is Adenylosuccinate synthetase.